We begin with the raw amino-acid sequence, 142 residues long: Profilin (142 aa).

The protein belongs to the profilin family. In terms of assembly, occurs in many kinds of cells as a complex with monomeric actin in a 1:1 ratio. Expressed specifically in coelomocytes in response to injury.

It localises to the cytoplasm. The protein resides in the cytoskeleton. Its function is as follows. Binds to actin and affects the structure of the cytoskeleton. At high concentrations, profilin prevents the polymerization of actin, whereas it enhances it at low concentrations. By binding to PIP2, it inhibits the formation of IP3 and DG. In Strongylocentrotus purpuratus (Purple sea urchin), this protein is Profilin.